A 164-amino-acid chain; its full sequence is MSITFGELVGNFILVTGSVIVLLLLIKKFAWGAIESILQTRSQQISRDIDQAEQSRLSAQQLEAKSQANLDASRLQASKIISDAKEIGQLQGDKLVAEATDEAKRLKEKALTDIEQSKSDAISAVKTEMSDLTVLLAEKIMGANLDKTAQSQLIDSYLDDLGEA.

A helical membrane pass occupies residues 6 to 26 (GELVGNFILVTGSVIVLLLLI).

Belongs to the ATPase B chain family. F-type ATPases have 2 components, F(1) - the catalytic core - and F(0) - the membrane proton channel. F(1) has five subunits: alpha(3), beta(3), gamma(1), delta(1), epsilon(1). F(0) has three main subunits: a(1), b(2) and c(10-14). The alpha and beta chains form an alternating ring which encloses part of the gamma chain. F(1) is attached to F(0) by a central stalk formed by the gamma and epsilon chains, while a peripheral stalk is formed by the delta and b chains.

Its subcellular location is the cell membrane. Its function is as follows. F(1)F(0) ATP synthase produces ATP from ADP in the presence of a proton or sodium gradient. F-type ATPases consist of two structural domains, F(1) containing the extramembraneous catalytic core and F(0) containing the membrane proton channel, linked together by a central stalk and a peripheral stalk. During catalysis, ATP synthesis in the catalytic domain of F(1) is coupled via a rotary mechanism of the central stalk subunits to proton translocation. Functionally, component of the F(0) channel, it forms part of the peripheral stalk, linking F(1) to F(0). The polypeptide is ATP synthase subunit b (Streptococcus pyogenes serotype M1).